The sequence spans 404 residues: Probable mannosyltransferase KTR3 (404 aa).

Residues 1-27 (MSVHHKKKLMPKSALLIRKYQKGIRSS) lie on the Cytoplasmic side of the membrane. A helical; Signal-anchor for type II membrane protein transmembrane segment spans residues 28-44 (FIGLIIVLSFLFFMSGS). Positions 45–83 (RSPEVPIAQGTSVSRVASKDYLMPFTDKSQGVIHPVDDG) are stem region. The Lumenal portion of the chain corresponds to 45–404 (RSPEVPIAQG…AGNYKLPPGI (360 aa)). The interval 84 to 404 (KKEKGVMVTL…AGNYKLPPGI (321 aa)) is catalytic. Glu-295 acts as the Nucleophile in catalysis.

This sequence belongs to the glycosyltransferase 15 family. Interacts with SVP26.

The protein localises to the membrane. Its function is as follows. Possible glycosyltransferase that transfers an alpha-D-mannosyl residue from GDP-mannose into lipid-linked oligosaccharide, forming an alpha-(1-&gt;2)-D-mannosyl-D-mannose linkage. The polypeptide is Probable mannosyltransferase KTR3 (KTR3) (Saccharomyces cerevisiae (strain ATCC 204508 / S288c) (Baker's yeast)).